A 184-amino-acid polypeptide reads, in one-letter code: Chromophore lyase CpcS/CpeS 1 (184 aa).

Belongs to the CpcS/CpeS biliprotein lyase family.

Its function is as follows. Covalently attaches a chromophore to Cys residue(s) of phycobiliproteins. The chain is Chromophore lyase CpcS/CpeS 1 from Synechococcus sp. (strain JA-3-3Ab) (Cyanobacteria bacterium Yellowstone A-Prime).